The following is a 136-amino-acid chain: Small ribosomal subunit protein uS9 (136 aa).

This sequence belongs to the universal ribosomal protein uS9 family.

The sequence is that of Small ribosomal subunit protein uS9 from Borreliella afzelii (strain PKo) (Borrelia afzelii).